Here is a 177-residue protein sequence, read N- to C-terminus: Large ribosomal subunit protein uL10 (177 aa).

The protein belongs to the universal ribosomal protein uL10 family. As to quaternary structure, part of the ribosomal stalk of the 50S ribosomal subunit. The N-terminus interacts with L11 and the large rRNA to form the base of the stalk. The C-terminus forms an elongated spine to which L12 dimers bind in a sequential fashion forming a multimeric L10(L12)X complex.

Forms part of the ribosomal stalk, playing a central role in the interaction of the ribosome with GTP-bound translation factors. The protein is Large ribosomal subunit protein uL10 of Leptospira borgpetersenii serovar Hardjo-bovis (strain JB197).